The following is a 784-amino-acid chain: Receptor-like protein 38 (784 aa).

An N-terminal signal peptide occupies residues 1–30 (MIRSQSYCFLGITITIYFFFCLLPLPNTFA). Residues 31 to 752 (SPPTQSLCRH…SELEEPVLNW (722 aa)) lie on the Extracellular side of the membrane. 5 LRR repeats span residues 109 to 133 (LQHL…IENL), 134 to 157 (SHLT…IGNL), 158 to 180 (NQLE…SFAN), 182 to 204 (TKLS…LSNL), and 205 to 227 (TSLA…DLSG). N-linked (GlcNAc...) asparagine glycosylation is present at Asn-132. Asn-180, Asn-193, and Asn-203 each carry an N-linked (GlcNAc...) asparagine glycan. One copy of the LRR 6; degenerate repeat lies at 228–251 (LHNLEQIFGNENSFVGLFPASLLK). 10 LRR repeats span residues 252-276 (ISSL…NTSS), 278-301 (SRLT…LSKL), 302-324 (VNLE…SISK), 326-349 (VNLT…IWKP), 351-373 (NLQS…EVVN), 374-400 (GAKL…NFRF), 402-422 (FFLD…LKNS), 423-446 (TDFN…CMDS), 447-470 (TMLR…LMNC), and 472-496 (DMEF…SRKS). The N-linked (GlcNAc...) asparagine glycan is linked to Asn-273. Asn-327 carries an N-linked (GlcNAc...) asparagine glycan. N-linked (GlcNAc...) asparagine glycosylation is found at Asn-421 and Asn-432. The stretch at 497 to 518 (LMVLVLRSNAFYGPVYNSTTYL) is one LRR 17; degenerate repeat. 3 N-linked (GlcNAc...) asparagine glycosylation sites follow: Asn-513, Asn-544, and Asn-562. An LRR 18 repeat occupies 520–544 (FPRLSIIDISNNDFVGSLPQDYFAN). LRR repeat units lie at residues 608 to 632 (FRGF…IGLL), 633 to 656 (SELL…LANI), 657 to 680 (TNLE…LGNL), and 682 to 705 (FLSN…QFGT). 6 N-linked (GlcNAc...) asparagine glycosylation sites follow: Asn-639, Asn-655, Asn-668, Asn-679, Asn-687, and Asn-707. A helical transmembrane segment spans residues 753–773 (IAAAIAFGPGVFCGFVIGHIF). Residues 774 to 784 (TSYKHLWFIAR) are Cytoplasmic-facing.

It belongs to the RLP family.

It localises to the cell membrane. In Arabidopsis thaliana (Mouse-ear cress), this protein is Receptor-like protein 38.